Reading from the N-terminus, the 2148-residue chain is Polyketide synthase 1 (2148 aa).

The interval 19 to 261 (FIFGDQSSCN…TPLAVHAPYH (243 aa)) is N-terminal acylcarrier protein transacylase domain (SAT). Residues 394–829 (ESKIAIIGMS…GGNTALLVED (436 aa)) form the Ketosynthase family 3 (KS3) domain. Catalysis depends on for beta-ketoacyl synthase activity residues Cys566, His701, and His745. The interval 929 to 1233 (AFVFSGQGSQ…PSLMRNKDGW (305 aa)) is malonyl-CoA:ACP transacylase (MAT) domain. The For acyl/malonyl transferase activity role is filled by Ser1018. Positions 1310–1624 (TASVHRIVHE…RKVLNTAMPP (315 aa)) are product template (PT) domain. An N-terminal hotdog fold region spans residues 1314–1447 (HRIVHESVEK…SSLHFEQPKV (134 aa)). In terms of domain architecture, PKS/mFAS DH spans 1314–1619 (HRIVHESVEK…FQGIPRKVLN (306 aa)). Residue His1346 is the Proton acceptor; for dehydratase activity of the active site. The interval 1474 to 1619 (LNSRMSSGVI…FQGIPRKVLN (146 aa)) is C-terminal hotdog fold. Catalysis depends on Asp1533, which acts as the Proton donor; for dehydratase activity. Residues 1619 to 1655 (NTAMPPPKSQNEAPVRSGPAKPAAKPPRSASSEHSGH) are disordered. Low complexity predominate over residues 1634–1650 (RSGPAKPAAKPPRSASS). Residues 1678–1752 (RNPMLPVFKI…DLAAHLGLDT (75 aa)) enclose the Carrier 1 domain. Residue Ser1712 is modified to O-(pantetheine 4'-phosphoryl)serine. 2 stretches are compositionally biased toward low complexity: residues 1757 to 1769 (QSSGQSSSFGGLS) and 1779 to 1796 (TSSVTTPPSLSPRSSVSG). Positions 1757–1796 (QSSGQSSSFGGLSPRSDSIGEITSSVTTPPSLSPRSSVSG) are disordered. A Carrier 2 domain is found at 1793–1870 (SVSGSQCKDV…SFKHMFQQGH (78 aa)). The residue at position 1830 (Ser1830) is an O-(pantetheine 4'-phosphoryl)serine. The segment at 1882–2146 (LKQYRATSTL…ERVAAFIRST (265 aa)) is thioesterase (TE) domain. The active-site For thioesterase activity is Ser1973.

Its function is as follows. Polyketide synthase; part of the Pks1 gene cluster that mediates the biosynthesis of an anthraquinone derivative pigment that contributes to conidial pigmentation that provides protection from UV radiation, heat and cold stress. The polyketide synthase Pks1 produces 1-acetyl-2,4,6,8-tetrahydroxy-9,10-anthraquinone though condensation of acetyl-CoA with malonyl-CoA. The dehydratase EthD and the laccase Mlac1 further convert the anthraquinone derivative into the final conidial pigment. The sequence is that of Polyketide synthase 1 from Metarhizium anisopliae (strain ARSEF 549).